The sequence spans 130 residues: Small ribosomal subunit protein uS9 (130 aa).

The interval 111-130 is disordered; the sequence is VERKKVGLHKARRATQFSKR. A compositionally biased stretch (basic residues) spans 116–130; it reads VGLHKARRATQFSKR.

The protein belongs to the universal ribosomal protein uS9 family.

The polypeptide is Small ribosomal subunit protein uS9 (Xylella fastidiosa (strain M23)).